The following is a 416-amino-acid chain: Ena/VASP-like protein (416 aa).

The 112-residue stretch at 1–112 folds into the WH1 domain; sequence MSEQSICQAR…NAMLFALNIM (112 aa). Residues 114–129 are compositionally biased toward polar residues; that stretch reads SQEGGPSSQRQVQNGP. 2 disordered regions span residues 114 to 133 and 141 to 369; these read SQEG…SPDE and VMEQ…PAGS. Position 130 is a phosphoserine (Ser130). Positions 141 to 157 are enriched in basic and acidic residues; that stretch reads VMEQHQQQRQESLERRT. The segment covering 169-180 has biased composition (low complexity); the sequence is PSSAASAPVSCS. Positions 181 to 206 are enriched in pro residues; it reads GPPPPPPPPVPPPPTGATPPPPPPLP. Positions 222-242 are EVH2 block A; sequence GLAAAIAGAKLRRVQRPEDAS. The EVH2 stretch occupies residues 222–413; sequence GLAAAIAGAK…DAIRQELSGI (192 aa). A KLKR motif is present at residues 231-234; that stretch reads KLRR. The span at 242–253 shows a compositional bias: low complexity; it reads SGGSSPSGTSKS. Ser246 and Ser259 each carry phosphoserine. The interval 265–282 is EVH2 block B; it reads GGLMEEMNKLLAKRRKAA. Positions 299–320 are enriched in polar residues; sequence EDPSTSPSPGTRAASQPPNSSE. Ser304, Ser306, Ser329, Ser331, Ser341, Ser349, Ser354, and Ser369 each carry phosphoserine. Residues 321–331 are compositionally biased toward basic and acidic residues; it reads AGRKPWERSNS. The tract at residues 342–362 is required for interaction with ZDHHC17; the sequence is RTPSVAKSPEAKSPLQSQPHS. Residues 379–413 form an EVH2 block C region; the sequence is DLDRMKQEILEEVVRELHKVKEEIIDAIRQELSGI.

This sequence belongs to the Ena/VASP family. As to quaternary structure, homotetramer. Binds to the SH3 domains of ABL1, LYN and SRC. Also binds to profilin, with preference for isoform IIa of PFN2, and the WW domain of APBB1/FE65. Binds to SEMA6A. Interacts, via the Pro-rich region, with the C-terminal SH3 domain of DNMBP. Interacts with RAPH1. Binds, via the EVH1 domain, the Pro-rich domain of Listeria monocytogenes actA. Binds, via the EVH1 domain, the Pro-rich domain of ZYX. Interacts with FYB1. Interacts with ZDHHC17. In terms of processing, phosphorylated by PKA; phosphorylation abolishes binding to SH3 domains of ABL and SRC.

The protein localises to the cytoplasm. It is found in the cytoskeleton. Its subcellular location is the stress fiber. It localises to the cell projection. The protein resides in the lamellipodium. Ena/VASP proteins are actin-associated proteins involved in a range of processes dependent on cytoskeleton remodeling and cell polarity such as axon guidance and lamellipodial and filopodial dynamics in migrating cells. EVL enhances actin nucleation and polymerization. The chain is Ena/VASP-like protein (EVL) from Homo sapiens (Human).